Here is a 495-residue protein sequence, read N- to C-terminus: uncharacterized protein (495 aa).

The segment at 337-360 (STSNRESDCSGNEDDSSNAKYAKK) is disordered.

This is an uncharacterized protein from Caenorhabditis elegans.